A 483-amino-acid chain; its full sequence is Cobyric acid synthase (483 aa).

The GATase cobBQ-type domain maps to lysine 252–valine 439. Cysteine 333 acts as the Nucleophile in catalysis. Residue histidine 431 is part of the active site.

This sequence belongs to the CobB/CobQ family. CobQ subfamily.

It participates in cofactor biosynthesis; adenosylcobalamin biosynthesis. In terms of biological role, catalyzes amidations at positions B, D, E, and G on adenosylcobyrinic A,C-diamide. NH(2) groups are provided by glutamine, and one molecule of ATP is hydrogenolyzed for each amidation. The chain is Cobyric acid synthase from Vibrio vulnificus (strain CMCP6).